The following is a 232-amino-acid chain: MALARLALRNLQQKLSPSLMGQSCERGLVGNRHNPMKLNRFMATSAGEQEDKMNTEVSVSEKKSPRQNFPRRRGRKSLWRNTDDHGYFTPTLNEFFPPTIGNTLIQATENMNRIFDNFNVNPFQLMGQVKEQDDCYKLRYEVPGLTKEDVKITVNDGILTIKGDHKAEEEKGSPEEDEYWSSKSYGYYNTSLSLPDDAKVEDIKAELKNGVLNLVIPRTEKPKKNVQEISVE.

Residues 1–42 (MALARLALRNLQQKLSPSLMGQSCERGLVGNRHNPMKLNRFM) constitute a mitochondrion transit peptide. A disordered region spans residues 44–82 (TSAGEQEDKMNTEVSVSEKKSPRQNFPRRRGRKSLWRNT). The segment covering 49–64 (QEDKMNTEVSVSEKKS) has biased composition (basic and acidic residues). Over residues 69-78 (FPRRRGRKSL) the composition is skewed to basic residues. Positions 114–232 (IFDNFNVNPF…KKNVQEISVE (119 aa)) constitute a sHSP domain.

It belongs to the small heat shock protein (HSP20) family. May form oligomeric structures.

It is found in the mitochondrion. In Arabidopsis thaliana (Mouse-ear cress), this protein is 26.5 kDa heat shock protein, mitochondrial (HSP26.5).